A 441-amino-acid polypeptide reads, in one-letter code: Transcription factor TOXE (441 aa).

A basic DNA-binding region region spans residues 14 to 40 (TDINERRKLQNRVAQRKYRTRQKTRMK). Residues 209–243 (FEPNDQRKTENLPREPCGSCPSSSHGYSPTSGNPS) are disordered. Over residues 212-221 (NDQRKTENLP) the composition is skewed to basic and acidic residues. Residues 228–241 (CPSSSHGYSPTSGN) are compositionally biased toward polar residues. ANK repeat units lie at residues 289–318 (DQFS…PLDI), 322–351 (SGKT…EMLA), 355–384 (EGNS…SCRE), and 413–440 (EGMT…SANV).

Belongs to the bZIP family. Monomer.

The protein localises to the nucleus. Transcription factor, part of the diffuse TOX2 gene cluster that mediates the biosynthesis of the HC-toxin, cyclic tetrapeptide of structure cyclo(D-Pro-L-Ala-D-Ala-L-Aeo), where Aeo stands for 2-amino-9,10-epoxi-8-oxodecanoic acid. HC-toxin is a determinant of specificity and virulence in the interaction between the producing fungus and its host, maize. TOXE is a pathway-specific transcription factor which coordinates the expression of genes involved in HC-toxin biosynthesis. Binds to the tox-box, a 10-bp motif with the consensus 5'-ATCTCNCGNA-3', which is found in the promoter of all genes involved in HC-toxin biosynthesis. Required for pathogenicity of the fungus on maize. The protein is Transcription factor TOXE of Cochliobolus carbonum (Maize leaf spot fungus).